The chain runs to 433 residues: Protein disulfide-isomerase A6 homolog (433 aa).

An N-terminal signal peptide occupies residues 1-19 (MRQLASILLLAFVVGSVSA). Thioredoxin domains lie at 20–119 (FYSP…GQRT) and 120–267 (AKAI…KHVA). Active-site nucleophile residues include cysteine 55, cysteine 58, cysteine 186, and cysteine 189. 2 disulfide bridges follow: cysteine 55–cysteine 58 and cysteine 186–cysteine 189. An N-linked (GlcNAc...) asparagine glycan is attached at asparagine 279. Positions 405-433 (VDPWDGKDGQLPTEEDIDLSDIDLDKDEL) are disordered. The span at 417 to 433 (TEEDIDLSDIDLDKDEL) shows a compositional bias: acidic residues. Positions 430-433 (KDEL) match the Prevents secretion from ER motif.

The protein belongs to the protein disulfide isomerase family. Interacts with Drpr (via extracellular region). In terms of tissue distribution, in the blastoderm embryo, expression starts at the anterior and posterior poles and later appears as broad stripes. Following gastrulation, expressed in midline precursor cells and the posterior head with low levels present throughout the embryo. During germ band extension, weak dorsoventral stripes of expression are evident. Midline expression begins and is retained throughout embryogenesis in clusters of cells in each segment in the central nervous system. At least some of the midline expression occurs in VUM neurons.

It localises to the endoplasmic reticulum lumen. The protein localises to the cell surface. It catalyses the reaction Catalyzes the rearrangement of -S-S- bonds in proteins.. Its function is as follows. Binds to both apoptotic cells and phagocytes and promotes Drpr-dependent phagocytosis of apoptotic cells. This Drosophila melanogaster (Fruit fly) protein is Protein disulfide-isomerase A6 homolog.